The primary structure comprises 306 residues: 4-diphosphocytidyl-2-C-methyl-D-erythritol kinase (306 aa).

K23 is an active-site residue. 108–118 (PIAAGIGGGSA) is a binding site for ATP. The active site involves D150.

The protein belongs to the GHMP kinase family. IspE subfamily.

It carries out the reaction 4-CDP-2-C-methyl-D-erythritol + ATP = 4-CDP-2-C-methyl-D-erythritol 2-phosphate + ADP + H(+). The protein operates within isoprenoid biosynthesis; isopentenyl diphosphate biosynthesis via DXP pathway; isopentenyl diphosphate from 1-deoxy-D-xylulose 5-phosphate: step 3/6. Functionally, catalyzes the phosphorylation of the position 2 hydroxy group of 4-diphosphocytidyl-2C-methyl-D-erythritol. The chain is 4-diphosphocytidyl-2-C-methyl-D-erythritol kinase from Rhodopseudomonas palustris (strain BisB18).